Consider the following 67-residue polypeptide: Conotoxin AbVIN (67 aa).

The signal sequence occupies residues 1-17 (VIIIAVLFLTACQLIAT). The propeptide occupies 18–40 (ASYARSERKHPDLRLSSRNSKLS). Intrachain disulfides connect Cys43/Cys57, Cys50/Cys61, and Cys56/Cys66.

The protein belongs to the conotoxin O1 superfamily. As to expression, expressed by the venom duct.

Its subcellular location is the secreted. The polypeptide is Conotoxin AbVIN (Conus abbreviatus (Abbreviated cone)).